Consider the following 124-residue polypeptide: Small ribosomal subunit protein uS12cz/uS12cy (124 aa).

Belongs to the universal ribosomal protein uS12 family. Part of the 30S ribosomal subunit.

The protein resides in the plastid. Its subcellular location is the chloroplast. With S4 and S5 plays an important role in translational accuracy. Located at the interface of the 30S and 50S subunits. This chain is Small ribosomal subunit protein uS12cz/uS12cy (rps12-A), found in Agrostis stolonifera (Creeping bentgrass).